A 144-amino-acid chain; its full sequence is MGTLRRFPASVLQIALALFLLASGARDLVHVDAGVFNAAVYFLGGLFRGHVAIGVLTLAVSLCCLTAGFFLLVDFLRPELSCVSAVLALFVVLWALNMVLVDVVGAFGRGKVLQNVSSALEHLHHTAVDLLVLGALIFVRQHTR.

A run of 4 helical transmembrane segments spans residues 7–29 (FPASVLQIALALFLLASGARDLV), 51–73 (VAIGVLTLAVSLCCLTAGFFLLV), 85–107 (AVLALFVVLWALNMVLVDVVGAF), and 122–139 (HLHHTAVDLLVLGALIFV).

It localises to the cell membrane. This is an uncharacterized protein from Treponema pallidum (strain Nichols).